Here is a 346-residue protein sequence, read N- to C-terminus: Hexosaminidase D (346 aa).

The active-site Proton donor is the Glu-141.

It belongs to the glycosyl hydrolase 20 family. As to quaternary structure, homodimer; disulfide-linked.

It is found in the cytoplasm. The protein resides in the nucleus. Its subcellular location is the extracellular vesicle. The catalysed reaction is Hydrolysis of terminal non-reducing N-acetyl-D-hexosamine residues in N-acetyl-beta-D-hexosaminides.. Inhibited by O-(2-acetamido-2-deoxy-D-glucopyranosylidene)amino N-phenylcarbamate (PUGNAc). Inhibited by galacto-NAG-thiazoline. In terms of biological role, has hexosaminidase activity. Responsible for the cleavage of the monosaccharides N-acetylglucosamine (GlcNAc) and N-acetylgalactosamine (GalNAc) from cellular substrates. Has a preference for galactosaminide over glucosaminide substrates. This chain is Hexosaminidase D, found in Bos taurus (Bovine).